A 291-amino-acid chain; its full sequence is 4-diphosphocytidyl-2-C-methyl-D-erythritol kinase (291 aa).

Lys10 is a catalytic residue. 100–110 (PIGGGLGGGSS) contacts ATP. The active site involves Asp142.

Belongs to the GHMP kinase family. IspE subfamily. In terms of assembly, homodimer.

The enzyme catalyses 4-CDP-2-C-methyl-D-erythritol + ATP = 4-CDP-2-C-methyl-D-erythritol 2-phosphate + ADP + H(+). It participates in isoprenoid biosynthesis; isopentenyl diphosphate biosynthesis via DXP pathway; isopentenyl diphosphate from 1-deoxy-D-xylulose 5-phosphate: step 3/6. Its function is as follows. Catalyzes the phosphorylation of the position 2 hydroxy group of 4-diphosphocytidyl-2C-methyl-D-erythritol. The protein is 4-diphosphocytidyl-2-C-methyl-D-erythritol kinase of Hamiltonella defensa subsp. Acyrthosiphon pisum (strain 5AT).